Here is a 174-residue protein sequence, read N- to C-terminus: MDYFTLFGLPARYLIDGNQLTTRYQELQRQFHPDRFATQPERERLASMQQAATINDAYQTLKHPLKRAEYMLSLQGFDLGNEQHTMRDTAFLMEQLELREELDAIERKPDAETLLAEFSRRLAQMTTTRTQQMVEQLDAQLWVQAADTVRKLRFLDKLQQQVEQLEERLFDDFA.

The 73-residue stretch at 2-74 folds into the J domain; that stretch reads DYFTLFGLPA…LKRAEYMLSL (73 aa).

It belongs to the HscB family. In terms of assembly, interacts with HscA and stimulates its ATPase activity. Interacts with IscU.

Its function is as follows. Co-chaperone involved in the maturation of iron-sulfur cluster-containing proteins. Seems to help targeting proteins to be folded toward HscA. This is Co-chaperone protein HscB from Yersinia pseudotuberculosis serotype O:1b (strain IP 31758).